Consider the following 886-residue polypeptide: Extended synaptotagmin-3 (886 aa).

The interval 1 to 21 (MRAEEPCAPGAPSALGAQRTP) is disordered. At 1–29 (MRAEEPCAPGAPSALGAQRTPGPELRLSS) the chain is on the cytoplasmic side. The next 2 helical transmembrane spans lie at 30–50 (QLLP…GPVY) and 51–71 (LAGY…LWMW). The Cytoplasmic portion of the chain corresponds to 72-886 (WRRNRRGKLG…ELTPNGQPRS (815 aa)). Positions 114–291 (DVERVEWANK…LPNRVTVPVK (178 aa)) constitute an SMP-LTD domain. C2 domains lie at 291–408 (KKGL…DEWF) and 426–566 (SLLT…QLDH). 9 residues coordinate Ca(2+): Lys-321, Asp-322, Asp-332, Asp-379, Glu-380, Asp-381, Asp-383, Asp-385, and Asp-386. The tract at residues 613-673 (QGPKAQPQEE…PEPKGKDSAK (61 aa)) is disordered. Positions 642-659 (RSTTTTTSATTVATEPTS) are enriched in low complexity. Residues 664 to 673 (PEPKGKDSAK) show a composition bias toward basic and acidic residues. The C2 3 domain occupies 754-876 (QLGEIQLTVR…DLIKGFSQWY (123 aa)). Residues 801–808 (RKWACRKK) are required for phosphatidylinositol 4,5-bisphosphate-dependent location at the cell membrane.

Belongs to the extended synaptotagmin family. Interacts with ESYT1 and ESYT2. Widely expressed with high level in cerebellum and skin.

It localises to the cell membrane. It is found in the endoplasmic reticulum membrane. Functionally, binds glycerophospholipids in a barrel-like domain and may play a role in cellular lipid transport. Tethers the endoplasmic reticulum to the cell membrane and promotes the formation of appositions between the endoplasmic reticulum and the cell membrane. The protein is Extended synaptotagmin-3 of Homo sapiens (Human).